A 383-amino-acid polypeptide reads, in one-letter code: Transposase InsI for insertion sequence element IS30C (383 aa).

An Integrase catalytic domain is found at 213 to 379 (VNGTPIHERS…TPKEIIERGV (167 aa)).

It belongs to the transposase IS30 family.

Required for the transposition of the insertion element. The chain is Transposase InsI for insertion sequence element IS30C (insI3) from Escherichia coli (strain K12).